The following is a 598-amino-acid chain: Potassium voltage-gated channel subfamily A member 5 (598 aa).

Positions 1–89 (MEIALGPLEN…EEGEGDPGLS (89 aa)) are disordered. Positions 1–195 (MEIALGPLEN…FYQLGDEAME (195 aa)) are tetramerization domain. At 1-231 (MEIALGPLEN…LIFEYPESSG (231 aa)) the chain is on the cytoplasmic side. Positions 60–69 (RPLPPQPPEL) are enriched in pro residues. Residue K205 forms a Glycyl lysine isopeptide (Lys-Gly) (interchain with G-Cter in SUMO) linkage. Residues 232–253 (SARAIAIVSVLVILISIITFCL) traverse the membrane as a helical segment. At 254 to 308 (ETLPEFKDERELLRHPPVPHQPPAAPALGANGSGAVAPASGSTVAPLLPRTLADP) the chain is on the extracellular side. The helical transmembrane segment at 309–330 (FFIVETTCVIWFTFELLVRFFA) threads the bilayer. The S-palmitoyl cysteine moiety is linked to residue C331. Over 331–341 (CPSKAEFSRNI) the chain is Cytoplasmic. The helical transmembrane segment at 342–362 (MNIIDIVAIFPYFITLGTELA) threads the bilayer. Over 363-380 (EQQPGGGGGGQNGQQAMS) the chain is Extracellular. A helical; Voltage-sensor membrane pass occupies residues 381–401 (LAILRVIRLVRVFRIFKLSRH). The Cytoplasmic portion of the chain corresponds to 402-416 (SKGLQILGKTLQASM). The tract at residues 403-416 (KGLQILGKTLQASM) is S4-S5 linker. The chain crosses the membrane as a helical span at residues 417-438 (RELGLLIFFLFIGVILFSSAVY). Over 439 to 452 (FAEADNQGTHFSSI) the chain is Extracellular. Positions 453–464 (PDAFWWAVVTMT) form an intramembrane region, helical. The Selectivity filter signature appears at 465 to 470 (TVGYGD). An intramembrane segment occupies 465-472 (TVGYGDMR). The chain crosses the membrane as a helical span at residues 480–508 (IVGSLCAIAGVLTIALPVPVIVSNFNYFY). Over 509–598 (HRETDHEEQA…CLDTSRETDL (90 aa)) the chain is Cytoplasmic. Positions 517–539 (QAALKEEPGSQSRGTSLDAGGQR) are disordered. K521 participates in a covalent cross-link: Glycyl lysine isopeptide (Lys-Gly) (interchain with G-Cter in SUMO). Positions 596-598 (TDL) match the PDZ-binding motif.

It belongs to the potassium channel family. A (Shaker) (TC 1.A.1.2) subfamily. Kv1.5/KCNA5 sub-subfamily. In terms of assembly, homotetramer and heterotetramer of potassium channel proteins. Interacts with DLG1, which enhances channel currents. Forms a ternary complex with DLG1 and CAV3. Interacts with KCNAB1. Interacts with UBE2I. Interacts with XIRP2; the interaction is required for normal action potential configuration in the heart. Post-translationally, glycosylated. In terms of processing, sumoylated on Lys-205, and Lys-521, preferentially with SUMO3. Sumoylation regulates the voltage sensitivity of the channel.

It localises to the cell membrane. The enzyme catalyses K(+)(in) = K(+)(out). In terms of biological role, voltage-gated potassium channel that mediates transmembrane potassium transport in excitable membranes. Forms tetrameric potassium-selective channels through which potassium ions pass in accordance with their electrochemical gradient. The channel alternates between opened and closed conformations in response to the voltage difference across the membrane. Can form functional homotetrameric channels and heterotetrameric channels that contain variable proportions of KCNA1, KCNA2, KCNA4, KCNA5, and possibly other family members as well; channel properties depend on the type of alpha subunits that are part of the channel. Channel properties are modulated by cytoplasmic beta subunits that regulate the subcellular location of the alpha subunits and promote rapid inactivation. Homotetrameric channels display rapid activation and slow inactivation. Required for normal electrical conduction including formation of the infranodal ventricular conduction system and normal action potential configuration, as a result of its interaction with XIRP2. May play a role in regulating the secretion of insulin in normal pancreatic islets. The sequence is that of Potassium voltage-gated channel subfamily A member 5 (KCNA5) from Oryctolagus cuniculus (Rabbit).